The primary structure comprises 306 residues: Pyridoxal 5'-phosphate synthase subunit PdxS (306 aa).

A D-ribose 5-phosphate-binding site is contributed by D36. Residue K93 is the Schiff-base intermediate with D-ribose 5-phosphate of the active site. G165 serves as a coordination point for D-ribose 5-phosphate. Residue R177 participates in D-glyceraldehyde 3-phosphate binding. Residues G226 and 247–248 (GS) contribute to the D-ribose 5-phosphate site.

It belongs to the PdxS/SNZ family. As to quaternary structure, in the presence of PdxT, forms a dodecamer of heterodimers.

It carries out the reaction aldehydo-D-ribose 5-phosphate + D-glyceraldehyde 3-phosphate + L-glutamine = pyridoxal 5'-phosphate + L-glutamate + phosphate + 3 H2O + H(+). It functions in the pathway cofactor biosynthesis; pyridoxal 5'-phosphate biosynthesis. Catalyzes the formation of pyridoxal 5'-phosphate from ribose 5-phosphate (RBP), glyceraldehyde 3-phosphate (G3P) and ammonia. The ammonia is provided by the PdxT subunit. Can also use ribulose 5-phosphate and dihydroxyacetone phosphate as substrates, resulting from enzyme-catalyzed isomerization of RBP and G3P, respectively. This chain is Pyridoxal 5'-phosphate synthase subunit PdxS, found in Nocardia farcinica (strain IFM 10152).